A 466-amino-acid polypeptide reads, in one-letter code: Asparagine--tRNA ligase (466 aa).

It belongs to the class-II aminoacyl-tRNA synthetase family. In terms of assembly, homodimer.

It is found in the cytoplasm. The enzyme catalyses tRNA(Asn) + L-asparagine + ATP = L-asparaginyl-tRNA(Asn) + AMP + diphosphate + H(+). The protein is Asparagine--tRNA ligase of Syntrophobacter fumaroxidans (strain DSM 10017 / MPOB).